Reading from the N-terminus, the 529-residue chain is O-acetylstemmadenine oxidase (529 aa).

Positions 1–23 are cleaved as a signal peptide; the sequence is MIKKVPIVLSIFCFLLLLSSSHG. The cysteines at positions 32 and 92 are disulfide-linked. An N-linked (GlcNAc...) asparagine glycan is attached at Asn52. Positions 70-244 constitute an FAD-binding PCMH-type domain; sequence KSPKPLAIIT…VSWKVKLVKV (175 aa). FAD-binding positions include 102–108, Ser113, 168–169, 173–177, and Phe183; these read IRSGGAD, VS, and GIGGH. Asn293 carries N-linked (GlcNAc...) asparagine glycosylation. Trp465 contacts FAD.

The protein belongs to the oxygen-dependent FAD-linked oxidoreductase family. It depends on FAD as a cofactor. In terms of tissue distribution, expressed in leaf epidermis.

The protein resides in the endoplasmic reticulum. Its subcellular location is the vacuole. It localises to the vesicle. It carries out the reaction O-acetyl-15alpha-stemmadenine + O2 = precondylocarpine acetate + H2O2. It participates in alkaloid biosynthesis. In terms of biological role, component of the seco-iridoid and derivatives monoterpenoid indole alkaloids (MIAs, e.g. vinblastine, catharanthine, tabersonine, vincadifformine, vindoline, vincristine, quinine and strychnine) biosynthesis pathway. Converts O-acetylstemmadenine (OAS) to reactive acetylated intermediates, likely dihydroprecondylocarpine acetate. This Catharanthus roseus (Madagascar periwinkle) protein is O-acetylstemmadenine oxidase.